The chain runs to 429 residues: Adenylosuccinate synthetase (429 aa).

GTP is bound by residues G12 to K18 and G40 to T42. D13 (proton acceptor) is an active-site residue. Residues D13 and G40 each coordinate Mg(2+). IMP contacts are provided by residues D13–K16, N38–H41, T129, R143, Q223, T238, and R302. The Proton donor role is filled by H41. V298–R304 is a binding site for substrate. Residues R304, K330–D332, and S412–S414 each bind GTP.

This sequence belongs to the adenylosuccinate synthetase family. As to quaternary structure, homodimer. The cofactor is Mg(2+).

The protein resides in the cytoplasm. The enzyme catalyses IMP + L-aspartate + GTP = N(6)-(1,2-dicarboxyethyl)-AMP + GDP + phosphate + 2 H(+). It participates in purine metabolism; AMP biosynthesis via de novo pathway; AMP from IMP: step 1/2. Plays an important role in the de novo pathway of purine nucleotide biosynthesis. Catalyzes the first committed step in the biosynthesis of AMP from IMP. The sequence is that of Adenylosuccinate synthetase from Maricaulis maris (strain MCS10) (Caulobacter maris).